A 462-amino-acid chain; its full sequence is Retinoic acid receptor RXR-alpha (462 aa).

The segment at 1–107 is disordered; the sequence is MDTKHFLPLD…MNPVSSSEDI (107 aa). Residues 1-134 form a modulating region; sequence MDTKHFLPLD…GNMASFTKHI (134 aa). Lys-4 is covalently cross-linked (Glycyl lysine isopeptide (Lys-Gly) (interchain with G-Cter in SUMO2)). Positions 11 to 24 are enriched in polar residues; that stretch reads FSTQVNSSLTSPTG. Phosphoserine occurs at positions 21 and 27. The segment covering 49–58 has biased composition (polar residues); it reads SPISTLSSPI. A phosphoserine; by MAPK8 and MAPK9 mark is found at Ser-56 and Ser-70. The segment covering 78–104 has biased composition (polar residues); sequence SVPTTPTLGFSTGSPQLSSPMNPVSSS. At Thr-82 the chain carries Phosphothreonine; by MAPK8 and MAPK9. A Glycyl lysine isopeptide (Lys-Gly) (interchain with G-Cter in SUMO) cross-link involves residue Lys-108. Ser-129 is modified (phosphoserine). Zn(2+) contacts are provided by Cys-135 and Cys-138. The NR C4-type zinc finger occupies 135–155; sequence CAICGDRSSGKHYGVYSCEGC. The nuclear receptor DNA-binding region spans 135 to 200; that stretch reads CAICGDRSSG…RYQKCLAMGM (66 aa). Lys-145 carries the post-translational modification N6-acetyllysine; by EP300. Residues Cys-152 and Cys-155 each coordinate Zn(2+). Positions 160–165 are nuclear localization signal; the sequence is KRTVRK. Positions 171, 177, 187, and 190 each coordinate Zn(2+). The segment at 171–195 adopts an NR C4-type zinc-finger fold; sequence CRDNKDCLIDKRQRNRCQYCRYQKC. The hinge stretch occupies residues 201 to 224; it reads KREAVQEERQRGKDRNENEVESTS. Residues 206 to 218 show a composition bias toward basic and acidic residues; it reads QEERQRGKDRNEN. The tract at residues 206-228 is disordered; that stretch reads QEERQRGKDRNENEVESTSSANE. An NR LBD domain is found at 227 to 458; that stretch reads NEDMPVERIL…TFLMEMLEAP (232 aa). The residue at position 259 (Ser-259) is a Phosphoserine. A Phosphoserine; by MAPK8 and MAPK9 modification is found at Ser-260. 9-cis-retinoate-binding residues include Arg-316 and Ala-327. Residues Arg-316 and Ala-327 each coordinate all-trans-retinoate. The required for nuclear export stretch occupies residues 348–368; sequence RVLTELVSKMRDMQMDKTELG.

It belongs to the nuclear hormone receptor family. NR2 subfamily. As to quaternary structure, homodimer. Heterodimer (via C-terminus) with RARA; required for ligand-dependent retinoic acid receptor transcriptional activity; association with RARA is enhanced by pulsatile shear stress. Heterodimer with PPARA (via the leucine-like zipper in the LBD); the interaction is required for PPARA transcriptional activity. Heterodimerizes with PPARG. Heterodimerizes (via NR LBD) with RARB. Heterodimerizes with NR1H4; the heterodimerization enhances the binding affinity for LXXLL motifs from coactivators. Interacts with NCOA3 and NCOA6 coactivators. Interacts with coactivator FAM120B. Interacts with coactivator PELP1, SENP6, SFPQ, DNTTIP2 and RNF8. Interacts with PRMT2. Interacts with ASXL1. Interacts with BHLHE40/DEC1, BHLHE41/DEC2, NCOR1 and NCOR2. Interacts in a ligand-dependent fashion with MED1 and NCOA1. Interacts with VDR. Interacts with EP300; the interaction is decreased by 9-cis retinoic acid. Heterodimer (via C-terminus) with NR4A1 (via DNA-binding domain); DNA-binding of the heterodimer is enhanced by 9-cis retinoic acid. NR4A1 competes with EP300 for interaction with RXRA and thereby attenuates EP300 mediated acetylation of RXRA. In the absence of hormonal ligand, interacts with TACC1. Interacts ith IGFBP3. (Microbial infection) Interacts (via the DNA binding domain) with HCV core protein; the interaction enhances the transcriptional activities of the RXRA/RARA and the RXRA/PPARA heterodimers. Post-translationally, acetylated by EP300; acetylation enhances DNA binding and transcriptional activity. In terms of processing, phosphorylated on serine and threonine residues mainly in the N-terminal modulating domain. Constitutively phosphorylated on Ser-21 in the presence or absence of ligand. Under stress conditions, hyperphosphorylated by activated JNK on Ser-56, Ser-70, Thr-82 and Ser-260. Phosphorylated on Ser-27, in vitro, by PKA. This phosphorylation is required for repression of cAMP-mediated transcriptional activity of RARA. Ubiquitinated by UBR5, leading to its degradation: UBR5 specifically recognizes and binds ligand-bound RXRA when it is not associated with coactivators (NCOAs). In presence of NCOAs, the UBR5-degron is not accessible, preventing its ubiquitination and degradation. Post-translationally, sumoylation negatively regulates transcriptional activity. Desumoylated specifically by SENP6. As to expression, expressed in lung fibroblasts (at protein level). Expressed in monocytes. Highly expressed in liver, also found in kidney and brain.

It localises to the nucleus. The protein localises to the cytoplasm. The protein resides in the mitochondrion. Functionally, receptor for retinoic acid that acts as a transcription factor. Forms homo- or heterodimers with retinoic acid receptors (RARs) and binds to target response elements in response to their ligands, all-trans or 9-cis retinoic acid, to regulate gene expression in various biological processes. The RAR/RXR heterodimers bind to the retinoic acid response elements (RARE) composed of tandem 5'-AGGTCA-3' sites known as DR1-DR5 to regulate transcription. The high affinity ligand for retinoid X receptors (RXRs) is 9-cis retinoic acid. In the absence of ligand, the RXR-RAR heterodimers associate with a multiprotein complex containing transcription corepressors that induce histone deacetylation, chromatin condensation and transcriptional suppression. On ligand binding, the corepressors dissociate from the receptors and coactivators are recruited leading to transcriptional activation. Serves as a common heterodimeric partner for a number of nuclear receptors, such as RARA, RARB and PPARA. The RXRA/RARB heterodimer can act as a transcriptional repressor or transcriptional activator, depending on the RARE DNA element context. The RXRA/PPARA heterodimer is required for PPARA transcriptional activity on fatty acid oxidation genes such as ACOX1 and the P450 system genes. Together with RARA, positively regulates microRNA-10a expression, thereby inhibiting the GATA6/VCAM1 signaling response to pulsatile shear stress in vascular endothelial cells. Acts as an enhancer of RARA binding to RARE DNA element. May facilitate the nuclear import of heterodimerization partners such as VDR and NR4A1. Promotes myelin debris phagocytosis and remyelination by macrophages. Plays a role in the attenuation of the innate immune system in response to viral infections, possibly by negatively regulating the transcription of antiviral genes such as type I IFN genes. Involved in the regulation of calcium signaling by repressing ITPR2 gene expression, thereby controlling cellular senescence. The protein is Retinoic acid receptor RXR-alpha (RXRA) of Homo sapiens (Human).